Consider the following 393-residue polypeptide: Flap endonuclease 1 (393 aa).

The N-domain stretch occupies residues 1 to 108 (MGILGLSKLL…SELQERRQRA (108 aa)). Asp34 serves as a coordination point for Mg(2+). Arg74 is a binding site for DNA. Mg(2+)-binding residues include Asp90, Glu162, Glu164, Asp183, and Asp185. The I-domain stretch occupies residues 126 to 257 (LMEKMSKRTV…QKAWEGIKKH (132 aa)). Glu162 lines the DNA pocket. Positions 235 and 237 each coordinate DNA. Asp237 provides a ligand contact to Mg(2+). The segment at 340-348 (TQGRLDQFF) is interaction with PCNA.

Belongs to the XPG/RAD2 endonuclease family. FEN1 subfamily. Interacts with PCNA. Three molecules of FEN1 bind to one PCNA trimer with each molecule binding to one PCNA monomer. PCNA stimulates the nuclease activity without altering cleavage specificity. It depends on Mg(2+) as a cofactor. Phosphorylated. Phosphorylation upon DNA damage induces relocalization to the nuclear plasma.

Its subcellular location is the nucleus. It localises to the nucleolus. The protein resides in the nucleoplasm. It is found in the mitochondrion. In terms of biological role, structure-specific nuclease with 5'-flap endonuclease and 5'-3' exonuclease activities involved in DNA replication and repair. During DNA replication, cleaves the 5'-overhanging flap structure that is generated by displacement synthesis when DNA polymerase encounters the 5'-end of a downstream Okazaki fragment. It enters the flap from the 5'-end and then tracks to cleave the flap base, leaving a nick for ligation. Also involved in the long patch base excision repair (LP-BER) pathway, by cleaving within the apurinic/apyrimidinic (AP) site-terminated flap. Acts as a genome stabilization factor that prevents flaps from equilibrating into structures that lead to duplications and deletions. Also possesses 5'-3' exonuclease activity on nicked or gapped double-stranded DNA, and exhibits RNase H activity. Also involved in replication and repair of rDNA and in repairing mitochondrial DNA. The protein is Flap endonuclease 1 of Trypanosoma cruzi (strain CL Brener).